The primary structure comprises 365 residues: Deoxyguanosinetriphosphate triphosphohydrolase-like protein (365 aa).

The HD domain maps to 52–187 (RLTHSIEVSQ…VDHADEIAYV (136 aa)).

This sequence belongs to the dGTPase family. Type 2 subfamily.

The protein is Deoxyguanosinetriphosphate triphosphohydrolase-like protein of Wolinella succinogenes (strain ATCC 29543 / DSM 1740 / CCUG 13145 / JCM 31913 / LMG 7466 / NCTC 11488 / FDC 602W) (Vibrio succinogenes).